The primary structure comprises 303 residues: HTH-type transcriptional regulator CatM (303 aa).

An HTH lysR-type domain is found at 1–58; sequence MELRHLRYFVTVVEEQSISKAAEKLCIAQPPLSRQIQKLEEELGIQLFERGFRPAKVT. A DNA-binding region (H-T-H motif) is located at residues 18-37; it reads ISKAAEKLCIAQPPLSRQIQ. Serine 99 and threonine 128 together coordinate cis,cis-muconate.

This sequence belongs to the LysR transcriptional regulatory family. Homotetramer in solution.

In terms of biological role, positively regulates the expression of catA, catBCIJFD and benPK in response to cis,cis-muconate. It binds to the catB-catM intercistronic region, to a specific sequence upstream of catA and to the benPK promoter region. Can also repress pca genes. This chain is HTH-type transcriptional regulator CatM (catM), found in Acinetobacter baylyi (strain ATCC 33305 / BD413 / ADP1).